We begin with the raw amino-acid sequence, 298 residues long: Lipoyl synthase (298 aa).

Residues C40, C45, C51, C67, C71, C74, and S280 each coordinate [4Fe-4S] cluster. The Radical SAM core domain occupies 53-269 (AVRKTATFMI…KEIALSKGFS (217 aa)).

It belongs to the radical SAM superfamily. Lipoyl synthase family. The cofactor is [4Fe-4S] cluster.

It localises to the cytoplasm. It catalyses the reaction [[Fe-S] cluster scaffold protein carrying a second [4Fe-4S](2+) cluster] + N(6)-octanoyl-L-lysyl-[protein] + 2 oxidized [2Fe-2S]-[ferredoxin] + 2 S-adenosyl-L-methionine + 4 H(+) = [[Fe-S] cluster scaffold protein] + N(6)-[(R)-dihydrolipoyl]-L-lysyl-[protein] + 4 Fe(3+) + 2 hydrogen sulfide + 2 5'-deoxyadenosine + 2 L-methionine + 2 reduced [2Fe-2S]-[ferredoxin]. It functions in the pathway protein modification; protein lipoylation via endogenous pathway; protein N(6)-(lipoyl)lysine from octanoyl-[acyl-carrier-protein]. Its function is as follows. Catalyzes the radical-mediated insertion of two sulfur atoms into the C-6 and C-8 positions of the octanoyl moiety bound to the lipoyl domains of lipoate-dependent enzymes, thereby converting the octanoylated domains into lipoylated derivatives. This Bacillus cereus (strain G9842) protein is Lipoyl synthase.